We begin with the raw amino-acid sequence, 85 residues long: Large ribosomal subunit protein bL27 (85 aa).

Residues 1 to 22 form a disordered region; it reads MAHKKAGGSTRNGRDSESKRLG.

Belongs to the bacterial ribosomal protein bL27 family.

This Teredinibacter turnerae (strain ATCC 39867 / T7901) protein is Large ribosomal subunit protein bL27.